The chain runs to 424 residues: Type II methyltransferase M.XorII (424 aa).

One can recognise an SAM-dependent MTase C5-type domain in the interval 4-367; it reads PIGIDLFAGA…GQIMKALRKK (364 aa). C83 is an active-site residue. The interval 404–424 is disordered; sequence RSRPVDRPAPRRHEERELVTA. Basic and acidic residues predominate over residues 406–424; the sequence is RPVDRPAPRRHEERELVTA.

Belongs to the class I-like SAM-binding methyltransferase superfamily. C5-methyltransferase family.

The enzyme catalyses a 2'-deoxycytidine in DNA + S-adenosyl-L-methionine = a 5-methyl-2'-deoxycytidine in DNA + S-adenosyl-L-homocysteine + H(+). A methylase that recognizes the double-stranded sequence 5'-CGATCG-3', methylates C-? on both strands and protects the DNA from cleavage by the XorII endonuclease. This chain is Type II methyltransferase M.XorII (xorIIM), found in Xanthomonas oryzae pv. oryzae (strain KACC10331 / KXO85).